Consider the following 406-residue polypeptide: Coenzyme A biosynthesis bifunctional protein CoaBC (406 aa).

The phosphopantothenoylcysteine decarboxylase stretch occupies residues 1–191; sequence MLNNRNVLLC…ETSAPLEGKH (191 aa). The active-site Proton donor is the Cys-157. The interval 192–406 is phosphopantothenate--cysteine ligase; sequence VVITAGPTRE…ALSKQTGERS (215 aa). The CTP site is built by Asp-281, Lys-291, Phe-325, Lys-339, and Lys-343.

In the N-terminal section; belongs to the HFCD (homo-oligomeric flavin containing Cys decarboxylase) superfamily. This sequence in the C-terminal section; belongs to the PPC synthetase family. The cofactor is Mg(2+). FMN is required as a cofactor.

The catalysed reaction is N-[(R)-4-phosphopantothenoyl]-L-cysteine + H(+) = (R)-4'-phosphopantetheine + CO2. It catalyses the reaction (R)-4'-phosphopantothenate + L-cysteine + CTP = N-[(R)-4-phosphopantothenoyl]-L-cysteine + CMP + diphosphate + H(+). Its pathway is cofactor biosynthesis; coenzyme A biosynthesis; CoA from (R)-pantothenate: step 2/5. It participates in cofactor biosynthesis; coenzyme A biosynthesis; CoA from (R)-pantothenate: step 3/5. Its function is as follows. Catalyzes two sequential steps in the biosynthesis of coenzyme A. In the first step cysteine is conjugated to 4'-phosphopantothenate to form 4-phosphopantothenoylcysteine. In the second step the latter compound is decarboxylated to form 4'-phosphopantotheine. The protein is Coenzyme A biosynthesis bifunctional protein CoaBC of Bacillus subtilis (strain 168).